Here is a 360-residue protein sequence, read N- to C-terminus: Phosphoserine aminotransferase (360 aa).

Arg-42 contacts L-glutamate. Residues 76–77 (AS), Trp-102, Thr-152, Asp-172, and Gln-195 each bind pyridoxal 5'-phosphate. Residue Lys-196 is modified to N6-(pyridoxal phosphate)lysine. 237 to 238 (NT) serves as a coordination point for pyridoxal 5'-phosphate.

Belongs to the class-V pyridoxal-phosphate-dependent aminotransferase family. SerC subfamily. Homodimer. Requires pyridoxal 5'-phosphate as cofactor.

The protein resides in the cytoplasm. The enzyme catalyses O-phospho-L-serine + 2-oxoglutarate = 3-phosphooxypyruvate + L-glutamate. The catalysed reaction is 4-(phosphooxy)-L-threonine + 2-oxoglutarate = (R)-3-hydroxy-2-oxo-4-phosphooxybutanoate + L-glutamate. The protein operates within amino-acid biosynthesis; L-serine biosynthesis; L-serine from 3-phospho-D-glycerate: step 2/3. Catalyzes the reversible conversion of 3-phosphohydroxypyruvate to phosphoserine and of 3-hydroxy-2-oxo-4-phosphonooxybutanoate to phosphohydroxythreonine. In Bacillus cereus (strain ATCC 14579 / DSM 31 / CCUG 7414 / JCM 2152 / NBRC 15305 / NCIMB 9373 / NCTC 2599 / NRRL B-3711), this protein is Phosphoserine aminotransferase.